A 477-amino-acid polypeptide reads, in one-letter code: Glycogen synthase (477 aa).

Lysine 15 lines the ADP-alpha-D-glucose pocket.

This sequence belongs to the glycosyltransferase 1 family. Bacterial/plant glycogen synthase subfamily.

It carries out the reaction [(1-&gt;4)-alpha-D-glucosyl](n) + ADP-alpha-D-glucose = [(1-&gt;4)-alpha-D-glucosyl](n+1) + ADP + H(+). It participates in glycan biosynthesis; glycogen biosynthesis. Functionally, synthesizes alpha-1,4-glucan chains using ADP-glucose. This Anaeromyxobacter dehalogenans (strain 2CP-1 / ATCC BAA-258) protein is Glycogen synthase.